The following is a 177-amino-acid chain: Interleukin-7 (177 aa).

The signal sequence occupies residues 1–25 (MFHVSFRYIFGLPPLILVLLPVASS). 3 disulfides stabilise this stretch: C27–C166, C59–C154, and C72–C117. Residues N95, N116, and N141 are each glycosylated (N-linked (GlcNAc...) asparagine).

This sequence belongs to the IL-7/IL-9 family. As to quaternary structure, interacts with IL7R and CSF2RG.

The protein resides in the secreted. Its function is as follows. Hematopoietic cytokine that plays an essential role in the development, expansion, and survival of naive and memory T-cells and B-cells thereby regulating the number of mature lymphocytes and maintaining lymphoid homeostasis. Mechanistically, exerts its biological effects through a receptor composed of IL7RA subunit and the cytokine receptor common subunit gamma/CSF2RG. Binding to the receptor leads to activation of various kinases including JAK1 or JAK3 depending on the cell type and subsequently propagation of signals through activation of several downstream signaling pathways including the PI3K/Akt/mTOR or the JAK-STAT5. This Homo sapiens (Human) protein is Interleukin-7 (IL7).